The following is a 488-amino-acid chain: Glutamyl-tRNA(Gln) amidotransferase subunit A (488 aa).

Active-site charge relay system residues include Lys-77 and Ser-152. Ser-176 serves as the catalytic Acyl-ester intermediate.

This sequence belongs to the amidase family. GatA subfamily. As to quaternary structure, heterotrimer of A, B and C subunits.

It carries out the reaction L-glutamyl-tRNA(Gln) + L-glutamine + ATP + H2O = L-glutaminyl-tRNA(Gln) + L-glutamate + ADP + phosphate + H(+). Allows the formation of correctly charged Gln-tRNA(Gln) through the transamidation of misacylated Glu-tRNA(Gln) in organisms which lack glutaminyl-tRNA synthetase. The reaction takes place in the presence of glutamine and ATP through an activated gamma-phospho-Glu-tRNA(Gln). This chain is Glutamyl-tRNA(Gln) amidotransferase subunit A, found in Streptococcus sanguinis (strain SK36).